Consider the following 314-residue polypeptide: tRNA dimethylallyltransferase (314 aa).

6–13 (GPTAVGKT) lines the ATP pocket. Residue 8 to 13 (TAVGKT) coordinates substrate. The segment at 31–34 (DSRQ) is interaction with substrate tRNA.

It belongs to the IPP transferase family. As to quaternary structure, monomer. It depends on Mg(2+) as a cofactor.

It carries out the reaction adenosine(37) in tRNA + dimethylallyl diphosphate = N(6)-dimethylallyladenosine(37) in tRNA + diphosphate. Catalyzes the transfer of a dimethylallyl group onto the adenine at position 37 in tRNAs that read codons beginning with uridine, leading to the formation of N6-(dimethylallyl)adenosine (i(6)A). This Pseudothermotoga lettingae (strain ATCC BAA-301 / DSM 14385 / NBRC 107922 / TMO) (Thermotoga lettingae) protein is tRNA dimethylallyltransferase.